Reading from the N-terminus, the 141-residue chain is Nucleoside triphosphatase NudI (141 aa).

Residues 1–141 enclose the Nudix hydrolase domain; it reads MRQRTIVCPL…RHTLALKGLL (141 aa). The short motif at 38–59 is the Nudix box element; that stretch reads GGVEPGERIEEALRREIREELG.

Belongs to the Nudix hydrolase family. NudI subfamily. In terms of assembly, monomer. Requires Mg(2+) as cofactor.

The catalysed reaction is a ribonucleoside 5'-triphosphate + H2O = a ribonucleoside 5'-phosphate + diphosphate + H(+). It carries out the reaction a 2'-deoxyribonucleoside 5'-triphosphate + H2O = a 2'-deoxyribonucleoside 5'-phosphate + diphosphate + H(+). It catalyses the reaction dUTP + H2O = dUMP + diphosphate + H(+). The enzyme catalyses dTTP + H2O = dTMP + diphosphate + H(+). The catalysed reaction is dCTP + H2O = dCMP + diphosphate + H(+). Functionally, catalyzes the hydrolysis of nucleoside triphosphates, with a preference for pyrimidine deoxynucleoside triphosphates (dUTP, dTTP and dCTP). This is Nucleoside triphosphatase NudI from Salmonella newport (strain SL254).